The chain runs to 943 residues: Translation initiation factor IF-2 (943 aa).

The span at valine 99–glutamine 113 shows a compositional bias: low complexity. Residues valine 99 to alanine 354 form a disordered region. The segment covering aspartate 117–lysine 141 has biased composition (basic and acidic residues). Over residues alanine 145–threonine 172 the composition is skewed to low complexity. The segment covering lysine 173–lysine 197 has biased composition (basic and acidic residues). The segment covering lysine 200 to glutamate 215 has biased composition (low complexity). Residues glutamine 216 to methionine 250 are compositionally biased toward basic and acidic residues. The segment covering lysine 251 to alanine 264 has biased composition (low complexity). Composition is skewed to basic and acidic residues over residues alanine 295–glutamine 308 and glycine 319–arginine 335. Residues proline 443–threonine 612 enclose the tr-type G domain. Residues glycine 452 to threonine 459 are G1. Glycine 452–threonine 459 provides a ligand contact to GTP. The interval glycine 477 to histidine 481 is G2. The segment at aspartate 498 to glycine 501 is G3. GTP contacts are provided by residues aspartate 498–histidine 502 and asparagine 552–aspartate 555. The G4 stretch occupies residues asparagine 552 to aspartate 555. The segment at serine 588–lysine 590 is G5.

Belongs to the TRAFAC class translation factor GTPase superfamily. Classic translation factor GTPase family. IF-2 subfamily.

Its subcellular location is the cytoplasm. In terms of biological role, one of the essential components for the initiation of protein synthesis. Protects formylmethionyl-tRNA from spontaneous hydrolysis and promotes its binding to the 30S ribosomal subunits. Also involved in the hydrolysis of GTP during the formation of the 70S ribosomal complex. The sequence is that of Translation initiation factor IF-2 from Neisseria gonorrhoeae (strain ATCC 700825 / FA 1090).